Consider the following 84-residue polypeptide: Capsid protein G8P (84 aa).

The first 29 residues, 1 to 29, serve as a signal peptide directing secretion; that stretch reads MSVITKVAAAKNKIVVGAGLLMASAGAFA. Topologically, residues 30-58 are periplasmic; it reads ADDGTSTATSYATEAMNSLKTQATDLIDQ. Residues 59 to 76 form a helical membrane-spanning segment; the sequence is TWPVVTSVAVAGLAIRLF. Residues 77–84 are Cytoplasmic-facing; the sequence is KKFSSKAV.

Belongs to the inovirus capsid protein family. As to quaternary structure, homomultimerizes. There are several thousands of this protein in the phage capsid.

It is found in the virion. The protein resides in the host membrane. Its function is as follows. Self assembles to form a helical capsid wrapping up the viral genomic DNA. The capsid displays a filamentous structure with a length of 760-1950 nm and a width of 6-8 nm. The virion assembly and budding take place at the host inner membrane. This chain is Capsid protein G8P (VIII), found in Escherichia coli (Bacteriophage I2-2).